Here is an 842-residue protein sequence, read N- to C-terminus: Transient receptor potential cation channel subfamily V member 1 (842 aa).

Positions 1–64 (MKRWVSLDSG…DSEETSPMDC (64 aa)) are disordered. The Cytoplasmic portion of the chain corresponds to 1 to 435 (MKRWVSLDSG…QDKWDRVVKR (435 aa)). Positions 10–21 (GESEDPLPEDTC) are enriched in acidic residues. Residues 113–141 (KLYDRRRIFEAVAQNNCQELESLLCFLQR) form an ANK 1 repeat. Position 118 (Arg-118) interacts with ATP. The residue at position 147 (Thr-147) is a Phosphothreonine; by PKA; in vitro. The stretch at 156–188 (TGKTCLLKAMLNLHSGQNDTIPLLLEIARQTDS) is one ANK 2 repeat. Residues Lys-158, Lys-163, Asn-167, 202–205 (YKGQ), and 213–214 (ER) each bind ATP. ANK repeat units follow at residues 206-231 (TALH…ADVQ), 252-279 (ELPL…QPAD), 288-324 (NTVL…KLHP), and 338-361 (TPLA…REIL). Thr-373 is modified (phosphothreonine; by PKA; in vitro). An ANK 7 repeat occupies 396-418 (NSVLEVIAYSSSETPNRHDMLLV). A helical membrane pass occupies residues 436-457 (IFYFNFFVYCLYMIIFTTAAYY). Residues 458 to 475 (RPVDGLPPYKLRNLPGDY) lie on the Extracellular side of the membrane. Residues 476-500 (FRVTGEILSVAGGVYFFFRGIQYFL) form a helical membrane-spanning segment. Residues 501 to 513 (QRRPSMKALFVDS) are Cytoplasmic-facing. Ser-505 is subject to Phosphoserine; by PKC/PRKCE. 514-515 (YS) serves as a coordination point for resiniferatoxin. A helical transmembrane segment spans residues 514–535 (YSEMLFFVQALFMLATVVLYFS). Over 536–538 (HCK) the chain is Extracellular. A helical membrane pass occupies residues 539-559 (EYVATMVFSLALGWINMLYYT). Resiniferatoxin is bound at residue Arg-560. Topologically, residues 560 to 562 (RGF) are cytoplasmic. Residues 563 to 601 (QQMGIYAVMIEKMILRDLCRFMFVYLVFLFGFSTAVVTL) form a helical membrane-spanning segment. The Extracellular portion of the chain corresponds to 602–633 (IEDGKNSSTSAESTSHRWRGFGCRSSDSSYNS). The N-linked (GlcNAc...) asparagine glycan is linked to Asn-607. Positions 634–655 (LYSTCLELFKFTIGMGDLEFTE) form an intramembrane region, pore-forming. Gly-647 contributes to the Na(+) binding site. Positions 647–650 (GMGD) match the Selectivity filter motif. Position 650 (Asp-650) interacts with Ca(2+). Over 656–659 (NYDF) the chain is Extracellular. A helical membrane pass occupies residues 660 to 686 (KAVFIILLLAYVILTYILLLNMLIALM). At 687-842 (GETVNKIAQE…FKDSVAAAEK (156 aa)) the chain is on the cytoplasmic side. Residues 688–716 (ETVNKIAQESKSIWKLQRAITILDTEKGF) are AD. Thr-708 carries the phosphothreonine modification. The interval 771-805 (EGVKRTLSFSLRSGRVSGRNWKNFALVPLLRDAST) is interaction with calmodulin. Residue Ser-778 is modified to Phosphoserine. The segment at 781-796 (LRSGRVSGRNWKNFAL) is required for PIP2-mediated channel inhibition. Ser-804 bears the Phosphoserine; by PKC/PRKCE and PKC/PRKCZ mark. Phosphoserine is present on Ser-824.

This sequence belongs to the transient receptor (TC 1.A.4) family. TrpV subfamily. TRPV1 sub-subfamily. In terms of assembly, homotetramer. Interacts with PIRT. May also form a heteromeric channel with TRPV3. Interacts with CALM, PRKCM and CSK. Interacts with PRKCG and NTRK1, probably by forming a trimeric complex. Interacts with the Scolopendra mutilans RhTx toxin. Interacts with TMEM100. Interacts with PACS2. Phosphorylation by PKA reverses capsaicin-induced dephosphorylation at multiple sites. Phosphorylation by CAMKII seems to regulate binding to vanilloids. Phosphorylated and modulated by PRKCE, PRKCM and probably PRKCZ. Dephosphorylation by calcineurin seems to lead to receptor desensitization and phosphorylation by CAMKII recovers activity.

The protein localises to the postsynaptic cell membrane. It localises to the cell projection. It is found in the dendritic spine membrane. Its subcellular location is the cell membrane. The catalysed reaction is Ca(2+)(in) = Ca(2+)(out). The enzyme catalyses Mg(2+)(in) = Mg(2+)(out). It catalyses the reaction Na(+)(in) = Na(+)(out). It carries out the reaction K(+)(in) = K(+)(out). With respect to regulation, the channel is sensitized by ATP binding. Repeated stimulation with capsaicin gives rise to progressively smaller responses, due to desensitization. This desensitization is triggered by the influx of calcium ions and is inhibited by elevated ATP levels. Ca(2+) and CALM displace ATP from its binding site and trigger a conformation change that leads to a closed, desensitized channel. The double-knot toxin (DkTx) from the Chinese earth tiger tarantula activates the channel and traps it in an open conformation. The Scolopendra mutilans RhTx toxin potentiates the heat activation pathway mediated by this channel by binding to the charge-rich outer pore region (in an activated state). Channel activity is activated via the interaction with PIRT and phosphatidylinositol 4,5-bisphosphate (PIP2). Both PIRT and PIP2 are required to activate channel activity. Intracellular PIP2 inhibits desensitization. Its function is as follows. Non-selective calcium permeant cation channel involved in detection of noxious chemical and thermal stimuli. Seems to mediate proton influx and may be involved in intracellular acidosis in nociceptive neurons. Involved in mediation of inflammatory pain and hyperalgesia. Sensitized by a phosphatidylinositol second messenger system activated by receptor tyrosine kinases, which involves PKC isozymes and PCL. Activation by vanilloids, like capsaicin, and temperatures higher than 42 degrees Celsius. Upon activation, exhibits a time- and Ca(2+)-dependent outward rectification, followed by a long-lasting refractory state. Mild extracellular acidic pH (6.5) potentiates channel activation by noxious heat and vanilloids, whereas acidic conditions (pH &lt;6) directly activate the channel. Can be activated by endogenous compounds, including 12-hydroperoxytetraenoic acid and bradykinin. Acts as ionotropic endocannabinoid receptor with central neuromodulatory effects. Triggers a form of long-term depression (TRPV1-LTD) mediated by the endocannabinoid anandamine in the hippocampus and nucleus accumbens by affecting AMPA receptors endocytosis. The protein is Transient receptor potential cation channel subfamily V member 1 (Trpv1) of Oryctolagus cuniculus (Rabbit).